Reading from the N-terminus, the 703-residue chain is Protein STRUBBELIG-RECEPTOR FAMILY 8 (703 aa).

The signal sequence occupies residues 1–27 (MAIGDRAMFTVLLLFIASISGFSVVRC). The Extracellular segment spans residues 28 to 291 (VTDPSDVQAL…GKGLSGGVVT (264 aa)). LRR repeat units follow at residues 96–120 (LKSL…LPPN), 122–142 (TSLN…ISAM), 143–165 (GSLS…IFAD), 166–190 (HKSL…LSTV), 192–212 (TLSV…VLSG), 213–233 (LPLK…PKEL), and 234–256 (SSIQ…PQPE). Residues Asn120, Asn130, Asn149, and Asn178 are each glycosylated (N-linked (GlcNAc...) asparagine). The N-linked (GlcNAc...) asparagine glycan is linked to Asn226. A disordered region spans residues 247–284 (DNVPASPQPERPGKKETPSGSKKPKIGSEEKSSDSGKG). Residues 292 to 312 (GIVFGSLFVAGIIALVLYLCL) form a helical membrane-spanning segment. Over 313 to 703 (HKKKRKVRGS…PEHEHVDISF (391 aa)) the chain is Cytoplasmic. The Protein kinase domain occupies 395–672 (FSQENIIGEG…SEVVQQLVRL (278 aa)). ATP contacts are provided by residues 401 to 409 (IGEGSLGRV) and Lys423.

Belongs to the protein kinase superfamily. Ser/Thr protein kinase family. In terms of tissue distribution, expressed in seedlings, roots, stems, leaves, flowers and siliques.

The protein resides in the membrane. This is Protein STRUBBELIG-RECEPTOR FAMILY 8 (SRF8) from Arabidopsis thaliana (Mouse-ear cress).